The primary structure comprises 426 residues: Serine--tRNA ligase (426 aa).

233–235 (TSE) is a binding site for L-serine. 264–266 (RAE) contributes to the ATP binding site. Glu-287 provides a ligand contact to L-serine. 351-354 (EISS) is a binding site for ATP. Ser-387 is an L-serine binding site.

It belongs to the class-II aminoacyl-tRNA synthetase family. Type-1 seryl-tRNA synthetase subfamily. Homodimer. The tRNA molecule binds across the dimer.

It is found in the cytoplasm. It catalyses the reaction tRNA(Ser) + L-serine + ATP = L-seryl-tRNA(Ser) + AMP + diphosphate + H(+). It carries out the reaction tRNA(Sec) + L-serine + ATP = L-seryl-tRNA(Sec) + AMP + diphosphate + H(+). The protein operates within aminoacyl-tRNA biosynthesis; selenocysteinyl-tRNA(Sec) biosynthesis; L-seryl-tRNA(Sec) from L-serine and tRNA(Sec): step 1/1. Catalyzes the attachment of serine to tRNA(Ser). Is also able to aminoacylate tRNA(Sec) with serine, to form the misacylated tRNA L-seryl-tRNA(Sec), which will be further converted into selenocysteinyl-tRNA(Sec). The chain is Serine--tRNA ligase from Xanthomonas campestris pv. campestris (strain 8004).